Here is a 330-residue protein sequence, read N- to C-terminus: MAVTMADITKLRKMTGAGMMDCKNALTDAEGDFDKAMKIIREKGQAVAAKRSDREASEGCVLVKVEEGFGAIIALKCETDFVAQNADFVKLTQDILDAAVANKCKTLEEVLALPMGDATVAQAVTDRTGITGEKMELDGYMVLEGATIAAYNHMNRNGLCTMVAFNKKVDEQLAKQVAMQVAAMNPIAVDEDGVSEEVKQKEIEVAVEKTKVEQVQKAVEAALKKANINPAHVDSEDHMESNMAKGWITAEDVAKAKEIIATVSAEKAANMPEQMIQNIAKGRLAKFLKEVCLLNQEDIMDAKKTVREVLKEADPELKVVDFKRFTLRAE.

Positions 79-82 (TDFV) are involved in Mg(2+) ion dislocation from EF-Tu.

This sequence belongs to the EF-Ts family.

The protein localises to the cytoplasm. Its function is as follows. Associates with the EF-Tu.GDP complex and induces the exchange of GDP to GTP. It remains bound to the aminoacyl-tRNA.EF-Tu.GTP complex up to the GTP hydrolysis stage on the ribosome. In Bacteroides fragilis (strain ATCC 25285 / DSM 2151 / CCUG 4856 / JCM 11019 / LMG 10263 / NCTC 9343 / Onslow / VPI 2553 / EN-2), this protein is Elongation factor Ts.